The sequence spans 418 residues: 3-deoxy-D-manno-octulosonic acid transferase (418 aa).

Residues 7–27 traverse the membrane as a helical; Signal-anchor segment; it reads FLSFLLLPIYFVIIFIRLLIG. The Proton acceptor role is filled by E60. CMP contacts are provided by residues 264-265, 305-307, and 330-333; these read PR, FGE, and NILE.

Belongs to the glycosyltransferase group 1 family. Glycosyltransferase 30 subfamily.

Its subcellular location is the cell inner membrane. It catalyses the reaction lipid IVA (E. coli) + CMP-3-deoxy-beta-D-manno-octulosonate = alpha-Kdo-(2-&gt;6)-lipid IVA (E. coli) + CMP + H(+). It participates in bacterial outer membrane biogenesis; LPS core biosynthesis. Involved in lipopolysaccharide (LPS) biosynthesis. Catalyzes the transfer of 3-deoxy-D-manno-octulosonate (Kdo) residue(s) from CMP-Kdo to lipid IV(A), the tetraacyldisaccharide-1,4'-bisphosphate precursor of lipid A. In Rickettsia bellii (strain RML369-C), this protein is 3-deoxy-D-manno-octulosonic acid transferase (waaA).